We begin with the raw amino-acid sequence, 360 residues long: Protein NDRG2 (360 aa).

Residues 324–360 (SRTASLSSEGNRSRSRTLSQSSESGGGPPAPLAEVTC) form a disordered region.

Belongs to the NDRG family.

Its subcellular location is the cytoplasm. In terms of biological role, contributes to the regulation of the Wnt signaling pathway. Down-regulates CTNNB1-mediated transcriptional activation of target genes. May be involved in neuron differentiation. This is Protein NDRG2 (ndrg2) from Xenopus laevis (African clawed frog).